The following is a 675-amino-acid chain: Potassium-transporting ATPase ATP-binding subunit (675 aa).

The next 4 helical transmembrane spans lie at 34 to 54, 65 to 85, 216 to 236, and 245 to 265; these read IMFVVEVGMILTLILICFPDI, LITIFIILLITILFANFSEAF, IALFTLLTTLTIIFLVVIVTL, and LILPIAMLIALTVCLIPTTIG. The active-site 4-aspartylphosphate intermediate is Asp-304. ATP is bound by residues Asp-341, Glu-345, 372 to 379, and Lys-390; that span reads FTAETRMS. The Mg(2+) site is built by Asp-513 and Asp-517. The next 3 membrane-spanning stretches (helical) occupy residues 569 to 591, 611 to 631, and 644 to 664; these read ALTTFSLANDVAKYFAILPALMM, AIISALIFNALIIVALIPIAM, and IFINNMLIYGLGGLIVPFLGI.

This sequence belongs to the cation transport ATPase (P-type) (TC 3.A.3) family. Type IA subfamily. As to quaternary structure, the system is composed of three essential subunits: KdpA, KdpB and KdpC.

Its subcellular location is the cell membrane. It carries out the reaction K(+)(out) + ATP + H2O = K(+)(in) + ADP + phosphate + H(+). Its function is as follows. Part of the high-affinity ATP-driven potassium transport (or Kdp) system, which catalyzes the hydrolysis of ATP coupled with the electrogenic transport of potassium into the cytoplasm. This subunit is responsible for energy coupling to the transport system and for the release of the potassium ions to the cytoplasm. The protein is Potassium-transporting ATPase ATP-binding subunit of Staphylococcus aureus (strain bovine RF122 / ET3-1).